A 562-amino-acid polypeptide reads, in one-letter code: MEKIWFQNYPKGSEKFLDTSKYESILDMFDKAVREHPDRPAYINMGQVLTFRKLEERSRAFAAYLQNEFKLQRGDRVALMMPNLLQYPIALFGILRAGLIAVNVNPLYTPRELELQLQDSGAVAIVVVSNFASTLEKVVFNTNVKHVILTRMGDQLSFGKRTLVNFVVKYVKKLVPKYKLPHAVTFREVLSIGKYRQYVRPEISREDLAFLQYTGGTTGVAKGAMLTHGNIITNVFQAKWIAEPFIGDHSRTRSAILALPLYHVFALTVNCLLFLELGVTAILITNPRDIEGFVKELKKYRFEAITGVNTLFNALLNNENFKEVDFSALKLSVGGGMAIQQSVATRWHELTGCNIIEGYGMTECSPLIAACPINVVKHNGTIGVPVPNTDIKIIKDDGSDAKIGEAGELWVKGDQVMRGYWQRPEATSEVLKDGWMATGDIVIMDESYSLRIVDRKKDIILVSGFNVYPNEIEDVVMLNYKVSEAVAIGVPHAVSGETIKIFVVKKDDSLTRDELRNHCRQYLTGYKVPKEIEFRDELPKTNVGKILRRVLRDEEIAKRPKH.

Belongs to the ATP-dependent AMP-binding enzyme family. It depends on Mg(2+) as a cofactor.

Its subcellular location is the membrane. It carries out the reaction a long-chain fatty acid + ATP + CoA = a long-chain fatty acyl-CoA + AMP + diphosphate. Its pathway is lipid metabolism; fatty acid beta-oxidation. Functionally, catalyzes the esterification, concomitant with transport, of exogenous long-chain fatty acids into metabolically active CoA thioesters for subsequent degradation or incorporation into phospholipids. In Haemophilus influenzae (strain ATCC 51907 / DSM 11121 / KW20 / Rd), this protein is Long-chain-fatty-acid--CoA ligase (fadD).